We begin with the raw amino-acid sequence, 78 residues long: Exodeoxyribonuclease 7 small subunit (78 aa).

The protein belongs to the XseB family. Heterooligomer composed of large and small subunits.

It is found in the cytoplasm. It carries out the reaction Exonucleolytic cleavage in either 5'- to 3'- or 3'- to 5'-direction to yield nucleoside 5'-phosphates.. In terms of biological role, bidirectionally degrades single-stranded DNA into large acid-insoluble oligonucleotides, which are then degraded further into small acid-soluble oligonucleotides. The polypeptide is Exodeoxyribonuclease 7 small subunit (Synechococcus sp. (strain JA-2-3B'a(2-13)) (Cyanobacteria bacterium Yellowstone B-Prime)).